Reading from the N-terminus, the 443-residue chain is Thymidine phosphorylase (443 aa).

This sequence belongs to the thymidine/pyrimidine-nucleoside phosphorylase family. In terms of assembly, homodimer.

It carries out the reaction thymidine + phosphate = 2-deoxy-alpha-D-ribose 1-phosphate + thymine. It participates in pyrimidine metabolism; dTMP biosynthesis via salvage pathway; dTMP from thymine: step 1/2. Its function is as follows. The enzymes which catalyze the reversible phosphorolysis of pyrimidine nucleosides are involved in the degradation of these compounds and in their utilization as carbon and energy sources, or in the rescue of pyrimidine bases for nucleotide synthesis. The sequence is that of Thymidine phosphorylase from Shewanella denitrificans (strain OS217 / ATCC BAA-1090 / DSM 15013).